Consider the following 314-residue polypeptide: NADH-ubiquinone oxidoreductase chain 2 (314 aa).

9 helical membrane-spanning segments follow: residues 13–35 (LGVM…VWLG), 61–80 (YFVV…VSLM), 85–107 (VSGL…LHSW), 117–139 (WLAS…SMIL), 144–166 (LWVV…NSVR), 189–209 (VVFV…FYGC), 224–244 (AASG…GFLA), 246–266 (VLVF…GSVI), and 294–314 (IWSL…VSFI).

Belongs to the complex I subunit 2 family.

The protein resides in the mitochondrion inner membrane. It catalyses the reaction a ubiquinone + NADH + 5 H(+)(in) = a ubiquinol + NAD(+) + 4 H(+)(out). Its function is as follows. Core subunit of the mitochondrial membrane respiratory chain NADH dehydrogenase (Complex I) that is believed to belong to the minimal assembly required for catalysis. Complex I functions in the transfer of electrons from NADH to the respiratory chain. The immediate electron acceptor for the enzyme is believed to be ubiquinone. The sequence is that of NADH-ubiquinone oxidoreductase chain 2 (ND2) from Mytilus edulis (Blue mussel).